We begin with the raw amino-acid sequence, 337 residues long: Probable dual-specificity RNA methyltransferase RlmN (337 aa).

Residue Glu-88 is the Proton acceptor of the active site. The Radical SAM core domain occupies 94–324 (SEKRLTVCVS…VRYSRGLATD (231 aa)). Cys-101 and Cys-327 are disulfide-bonded. [4Fe-4S] cluster contacts are provided by Cys-108, Cys-112, and Cys-115. Residues 155-156 (GE), Ser-185, 208-210 (SLH), and Asn-284 each bind S-adenosyl-L-methionine. Cys-327 serves as the catalytic S-methylcysteine intermediate.

This sequence belongs to the radical SAM superfamily. RlmN family. It depends on [4Fe-4S] cluster as a cofactor.

The protein localises to the cytoplasm. The enzyme catalyses adenosine(2503) in 23S rRNA + 2 reduced [2Fe-2S]-[ferredoxin] + 2 S-adenosyl-L-methionine = 2-methyladenosine(2503) in 23S rRNA + 5'-deoxyadenosine + L-methionine + 2 oxidized [2Fe-2S]-[ferredoxin] + S-adenosyl-L-homocysteine. The catalysed reaction is adenosine(37) in tRNA + 2 reduced [2Fe-2S]-[ferredoxin] + 2 S-adenosyl-L-methionine = 2-methyladenosine(37) in tRNA + 5'-deoxyadenosine + L-methionine + 2 oxidized [2Fe-2S]-[ferredoxin] + S-adenosyl-L-homocysteine. Functionally, specifically methylates position 2 of adenine 2503 in 23S rRNA and position 2 of adenine 37 in tRNAs. The protein is Probable dual-specificity RNA methyltransferase RlmN of Microcystis aeruginosa (strain NIES-843 / IAM M-2473).